The primary structure comprises 362 residues: Probable dual-specificity RNA methyltransferase RlmN (362 aa).

Glu105 (proton acceptor) is an active-site residue. Positions 111–344 (HEYGNSICVT…VTIRREQGHD (234 aa)) constitute a Radical SAM core domain. A disulfide bridge links Cys118 with Cys349. Residues Cys125, Cys129, and Cys132 each contribute to the [4Fe-4S] cluster site. Residues 175 to 176 (GE), Ser207, 230 to 232 (SLH), and Asn306 each bind S-adenosyl-L-methionine. Catalysis depends on Cys349, which acts as the S-methylcysteine intermediate.

It belongs to the radical SAM superfamily. RlmN family. The cofactor is [4Fe-4S] cluster.

It localises to the cytoplasm. It carries out the reaction adenosine(2503) in 23S rRNA + 2 reduced [2Fe-2S]-[ferredoxin] + 2 S-adenosyl-L-methionine = 2-methyladenosine(2503) in 23S rRNA + 5'-deoxyadenosine + L-methionine + 2 oxidized [2Fe-2S]-[ferredoxin] + S-adenosyl-L-homocysteine. It catalyses the reaction adenosine(37) in tRNA + 2 reduced [2Fe-2S]-[ferredoxin] + 2 S-adenosyl-L-methionine = 2-methyladenosine(37) in tRNA + 5'-deoxyadenosine + L-methionine + 2 oxidized [2Fe-2S]-[ferredoxin] + S-adenosyl-L-homocysteine. Specifically methylates position 2 of adenine 2503 in 23S rRNA and position 2 of adenine 37 in tRNAs. This chain is Probable dual-specificity RNA methyltransferase RlmN, found in Bacillus thuringiensis subsp. konkukian (strain 97-27).